We begin with the raw amino-acid sequence, 546 residues long: Chaperonin GroEL (546 aa).

ATP-binding positions include 29 to 32, Lys-50, 86 to 90, Gly-414, 478 to 480, and Asp-494; these read TLGP, DGTTT, and NAA.

It belongs to the chaperonin (HSP60) family. In terms of assembly, forms a cylinder of 14 subunits composed of two heptameric rings stacked back-to-back. Interacts with the co-chaperonin GroES.

The protein resides in the cytoplasm. It carries out the reaction ATP + H2O + a folded polypeptide = ADP + phosphate + an unfolded polypeptide.. Together with its co-chaperonin GroES, plays an essential role in assisting protein folding. The GroEL-GroES system forms a nano-cage that allows encapsulation of the non-native substrate proteins and provides a physical environment optimized to promote and accelerate protein folding. The chain is Chaperonin GroEL from Psychrobacter arcticus (strain DSM 17307 / VKM B-2377 / 273-4).